Consider the following 95-residue polypeptide: DNA-directed RNA polymerase subunit Rpo11 (95 aa).

This sequence belongs to the archaeal Rpo11/eukaryotic RPB11/RPC19 RNA polymerase subunit family. As to quaternary structure, part of the RNA polymerase complex.

The protein localises to the cytoplasm. The catalysed reaction is RNA(n) + a ribonucleoside 5'-triphosphate = RNA(n+1) + diphosphate. DNA-dependent RNA polymerase (RNAP) catalyzes the transcription of DNA into RNA using the four ribonucleoside triphosphates as substrates. In Thermococcus onnurineus (strain NA1), this protein is DNA-directed RNA polymerase subunit Rpo11.